A 271-amino-acid polypeptide reads, in one-letter code: uncharacterized protein (271 aa).

This is an uncharacterized protein from Acanthamoeba polyphaga mimivirus (APMV).